The chain runs to 365 residues: Neuronal migration protein doublecortin (365 aa).

Residues 11–31 (RDKTSRNMRGSRMNGLPSPTH) form a disordered region. Threonine 14 is modified (phosphothreonine; by PKC). The residue at position 28 (serine 28) is a Phosphoserine; by CDK5. Serine 47 bears the Phosphoserine; by MARK1 and PKA mark. 2 consecutive Doublecortin domains span residues 53–139 (KKVR…VEYT) and 180–263 (KLVT…AQDD). Tyrosine 70 is subject to Phosphotyrosine; by ABL. Residue serine 74 is modified to Phosphoserine; by PKC. Serine 90 carries the post-translational modification Phosphoserine; by CK2. Serine 110 carries the phosphoserine; by PKC modification. Residue serine 115 is modified to Phosphoserine; by CK2, MARK1 and PKA. At serine 265 the chain carries Phosphoserine; by CK2. Residues 275-365 (KGNPSATAGP…DDSDSLGDSM (91 aa)) are disordered. Serine 287 carries the post-translational modification Phosphoserine; by CDK5. Phosphothreonine; by CDK5 is present on threonine 289. A Phosphoserine; by PKC modification is found at serine 294. Serine 297 bears the Phosphoserine; by CDK5 mark. A Phosphoserine; by CK2 modification is found at serine 306. Position 306 is a phosphoserine; by DYRK2 (serine 306). Polar residues predominate over residues 307–341 (PADSGNDQDANGTSSSQLSTPKSKQSPISTPTSPG). Position 326 is a phosphothreonine; by CDK5 (threonine 326). The residue at position 326 (threonine 326) is a Phosphothreonine; by PKC and MAPK. Serine 332 is modified (phosphoserine; by CDK5). Phosphoserine; by MAPK is present on serine 332. Phosphothreonine; by MAPK is present on threonine 336. Serine 339 bears the Phosphoserine; by CDK5 mark. Serine 339 is subject to Phosphoserine; by MAPK. The residue at position 342 (serine 342) is a Phosphoserine; by PKC. A phosphoserine; by CK2 mark is found at serine 354 and serine 360. Positions 356–365 (DDSDSLGDSM) are enriched in acidic residues.

Interacts with tubulin. Interacts with USP9X. Post-translationally, phosphorylation by MARK1, MARK2 and PKA regulates its ability to bind microtubules. Phosphorylation at Ser-265 and Ser-297 seems to occur only in neonatal brain, the levels falling precipitously by postnatal day 21. In terms of processing, ubiquitinated by MDM2, leading to its degradation by the proteasome. Ubiquitinated by MDM2 and subsequent degradation leads to reduce the dendritic spine density of olfactory bulb granule cells. In terms of tissue distribution, highly expressed in neuronal cells of fetal brain (in the majority of cells of the cortical plate, intermediate zone and ventricular zone), but not expressed in other fetal tissues. In the adult, highly expressed in the brain frontal lobe, but very low expression in other regions of brain, and not detected in heart, placenta, lung, liver, skeletal muscles, kidney and pancreas.

The protein localises to the cytoplasm. Its subcellular location is the cell projection. It is found in the neuron projection. Functionally, microtubule-associated protein required for initial steps of neuronal dispersion and cortex lamination during cerebral cortex development. May act by competing with the putative neuronal protein kinase DCLK1 in binding to a target protein. May in that way participate in a signaling pathway that is crucial for neuronal interaction before and during migration, possibly as part of a calcium ion-dependent signal transduction pathway. May be part with PAFAH1B1/LIS-1 of overlapping, but distinct, signaling pathways that promote neuronal migration. This chain is Neuronal migration protein doublecortin (DCX), found in Homo sapiens (Human).